A 96-amino-acid polypeptide reads, in one-letter code: Colicin-K immunity protein (96 aa).

The chain crosses the membrane as a helical span at residues 73-93; it reads ALFYLLMAIPVGLPSFIYYTL.

It is found in the cell membrane. Functionally, this protein is able to protect a cell, which harbors the plasmid ColK encoding colicin K, against colicin K. This Escherichia coli protein is Colicin-K immunity protein (cki).